Consider the following 458-residue polypeptide: Succinate-semialdehyde dehydrogenase [NADP(+)] 1 (458 aa).

NADP(+)-binding positions include 134-135, 158-161, and 210-211; these read WN, KHAS, and GS. The active-site Proton acceptor is glutamate 232. Leucine 233 lines the NADP(+) pocket. The Nucleophile role is filled by cysteine 266. Position 363 (glutamate 363) interacts with NADP(+).

The protein belongs to the aldehyde dehydrogenase family.

It carries out the reaction succinate semialdehyde + NADP(+) + H2O = succinate + NADPH + 2 H(+). Its function is as follows. Catalyzes the NADP(+)-dependent oxidation of succinate semialdehyde to succinate. It is believed to be the main source of succinate semialdehyde dehydrogenase activity in Mycobacterium. The chain is Succinate-semialdehyde dehydrogenase [NADP(+)] 1 (gabD1) from Mycobacterium ulcerans (strain Agy99).